Reading from the N-terminus, the 974-residue chain is Apical junction component 1 homolog (974 aa).

3 disordered regions span residues 23–137 (PGLT…PSYP), 201–233 (ARSSRSCAPRETTSWARTAPQFHGLTVPGPRHV), and 306–326 (CSRPYLSEEPPRPSPRRGGSY). Ser52 carries the post-translational modification Phosphoserine. Over residues 69–79 (EPPPPEPAPPR) the composition is skewed to pro residues. Residues 116 to 134 (RGREAQRAVRVEGSPRREP) are compositionally biased toward basic and acidic residues. Phosphoserine is present on Ser129. Positions 201 to 216 (ARSSRSCAPRETTSWA) are enriched in polar residues. Residue Arg322 is modified to Omega-N-methylarginine. Phosphoserine is present on residues Ser468, Ser509, and Ser512. Residues 539 to 576 (DLRSVDRPTAKGWELPGGRPRQPVSTVPEGPASSRQRS) form a disordered region. The residue at position 593 (Ser593) is a Phosphoserine. A disordered region spans residues 618-661 (AGPGGATLLAPSRSPPASAGSTEEPTGSGEAADASPEPSADEDD). Over residues 623-636 (ATLLAPSRSPPASA) the composition is skewed to low complexity. Arg749 carries the post-translational modification Asymmetric dimethylarginine; alternate. Arg749 carries the omega-N-methylarginine; alternate modification.

Its subcellular location is the apical cell membrane. The protein resides in the cell projection. It is found in the cilium. The protein localises to the cell junction. It localises to the adherens junction. Functionally, may be involved in the control of adherens junction integrity. The polypeptide is Apical junction component 1 homolog (Ajm1) (Mus musculus (Mouse)).